A 161-amino-acid polypeptide reads, in one-letter code: Vitamin K epoxide reductase complex subunit 1 (161 aa).

Residues 1–9 (MGTTWRSPG) are Cytoplasmic-facing. A helical membrane pass occupies residues 10–29 (RLRLALCLAGLALSLYALHV). Residues 30 to 80 (KAARARNEDYRALCDVGTAISCSRVFSSRWGRGFGLVEHVLGADSILNQSN) are Lumenal-facing. A disulfide bridge links C43 with C51. N80 contacts (S)-warfarin. Residues 81 to 95 (SIFGCMFYTIQLLLG) traverse the membrane as a helical segment. Residues 96-100 (CLRGR) lie on the Cytoplasmic side of the membrane. Residues 101 to 128 (WASILLILSSLVSVAGSLYLAWILFFVL) form a helical membrane-spanning segment. Topologically, residues 129 to 131 (YDF) are lumenal. A disulfide bridge connects residues C132 and C135. Residues 132–153 (CIVCITTYAINAGLMLLSFQKV) form a helical membrane-spanning segment. Residues C135 and Y139 each contribute to the phylloquinone site. Y139 provides a ligand contact to (S)-warfarin. Residues 154–161 (PEHKVKKP) lie on the Cytoplasmic side of the membrane.

The protein belongs to the VKOR family. As to expression, highly expressed in liver. Detected at lower levels in lung, kidney and testis.

Its subcellular location is the endoplasmic reticulum membrane. The enzyme catalyses phylloquinone + [protein]-disulfide + H2O = 2,3-epoxyphylloquinone + [protein]-dithiol. It catalyses the reaction phylloquinol + [protein]-disulfide = phylloquinone + [protein]-dithiol. With respect to regulation, inhibited by warfarin (coumadin). Warfarin locks VKORC1 in both redox states into the closed conformation. Involved in vitamin K metabolism. Catalytic subunit of the vitamin K epoxide reductase (VKOR) complex which reduces inactive vitamin K 2,3-epoxide to active vitamin K. Vitamin K is required for the gamma-carboxylation of various proteins, including clotting factors, and is required for normal blood coagulation, but also for normal bone development. This chain is Vitamin K epoxide reductase complex subunit 1 (Vkorc1), found in Rattus norvegicus (Rat).